Consider the following 180-residue polypeptide: Nucleoside-triphosphatase THEP1 (180 aa).

ATP contacts are provided by residues 18–25 and 104–111; these read GRPGVGKT and LVIMDEIG.

The protein belongs to the THEP1 NTPase family.

It catalyses the reaction a ribonucleoside 5'-triphosphate + H2O = a ribonucleoside 5'-diphosphate + phosphate + H(+). Has nucleotide phosphatase activity towards ATP, GTP, CTP, TTP and UTP. May hydrolyze nucleoside diphosphates with lower efficiency. The polypeptide is Nucleoside-triphosphatase THEP1 (Metallosphaera sedula (strain ATCC 51363 / DSM 5348 / JCM 9185 / NBRC 15509 / TH2)).